Reading from the N-terminus, the 322-residue chain is NADH-cytochrome b5 reductase 2 (322 aa).

Residues 32 to 48 form a helical membrane-spanning segment; it reads LAPIYISVGLAGLGVGL. In terms of domain architecture, FAD-binding FR-type spans 72–176; it reads QGWVDLKLSE…KGPIPKYPWE (105 aa). Position 179-214 (179-214) interacts with FAD; the sequence is KHKHICLIAGGTGITPMYQLARQIFKNPEDQTKVTL.

The protein belongs to the flavoprotein pyridine nucleotide cytochrome reductase family. It depends on FAD as a cofactor.

The protein localises to the mitochondrion outer membrane. It carries out the reaction 2 Fe(III)-[cytochrome b5] + NADH = 2 Fe(II)-[cytochrome b5] + NAD(+) + H(+). May mediate the reduction of outer membrane cytochrome b5. In Aspergillus clavatus (strain ATCC 1007 / CBS 513.65 / DSM 816 / NCTC 3887 / NRRL 1 / QM 1276 / 107), this protein is NADH-cytochrome b5 reductase 2 (mcr1).